A 127-amino-acid polypeptide reads, in one-letter code: DNA-directed RNA polymerase subunit omega (127 aa).

This sequence belongs to the RNA polymerase subunit omega family. In terms of assembly, the RNAP catalytic core consists of 2 alpha, 1 beta, 1 beta' and 1 omega subunit. When a sigma factor is associated with the core the holoenzyme is formed, which can initiate transcription.

It carries out the reaction RNA(n) + a ribonucleoside 5'-triphosphate = RNA(n+1) + diphosphate. Functionally, promotes RNA polymerase assembly. Latches the N- and C-terminal regions of the beta' subunit thereby facilitating its interaction with the beta and alpha subunits. The protein is DNA-directed RNA polymerase subunit omega of Rickettsia peacockii (strain Rustic).